We begin with the raw amino-acid sequence, 244 residues long: 5-oxoprolinase subunit A (244 aa).

Belongs to the LamB/PxpA family. As to quaternary structure, forms a complex composed of PxpA, PxpB and PxpC.

The enzyme catalyses 5-oxo-L-proline + ATP + 2 H2O = L-glutamate + ADP + phosphate + H(+). Catalyzes the cleavage of 5-oxoproline to form L-glutamate coupled to the hydrolysis of ATP to ADP and inorganic phosphate. The chain is 5-oxoprolinase subunit A from Shigella flexneri serotype 5b (strain 8401).